The chain runs to 174 residues: Extracellular cysteine protease (174 aa).

Catalysis depends on residues C24, H120, and N141.

It belongs to the peptidase C47 family. In terms of processing, proteolytically cleaved.

The protein resides in the secreted. Its subcellular location is the cell wall. Inhibited by heavy metal ions such as Zn(2+) or Ni(2+), iodoacetamide, N-ethylmaleimide, leupeptin, SDS and E-64. Also inhibited by chloromethylketones TPCK and TLCK and by human plasma inhibitor alpha-2-macroglobulin. Stimulated by L-cysteine. In terms of biological role, cysteine protease able to cleave elastin, insulin, myoglobin, fibronectin, fibrinogen, HMW-kininogen, alpha-1-protease inhibitor and alpha-1-antitrypsin. Along with other extracellular proteases may contribute to the colonization and infection of human tissues. This Staphylococcus epidermidis protein is Extracellular cysteine protease (ecpA).